Reading from the N-terminus, the 351-residue chain is Methionine import ATP-binding protein MetN (351 aa).

The 240-residue stretch at 2–241 (IVTEALTKAF…PQHAVTRAFV (240 aa)) folds into the ABC transporter domain. 38–45 (GRSGAGKS) contacts ATP.

Belongs to the ABC transporter superfamily. Methionine importer (TC 3.A.1.24) family. As to quaternary structure, the complex is composed of two ATP-binding proteins (MetN), two transmembrane proteins (MetI) and a solute-binding protein (MetQ).

Its subcellular location is the cell inner membrane. The enzyme catalyses L-methionine(out) + ATP + H2O = L-methionine(in) + ADP + phosphate + H(+). The catalysed reaction is D-methionine(out) + ATP + H2O = D-methionine(in) + ADP + phosphate + H(+). Its function is as follows. Part of the ABC transporter complex MetNIQ involved in methionine import. Responsible for energy coupling to the transport system. The chain is Methionine import ATP-binding protein MetN from Rhodospirillum rubrum (strain ATCC 11170 / ATH 1.1.1 / DSM 467 / LMG 4362 / NCIMB 8255 / S1).